The sequence spans 644 residues: Exoribonuclease 2 (644 aa).

The RNB domain maps to Arg-189–Lys-516. An S1 motif domain is found at Asp-561–Val-643.

This sequence belongs to the RNR ribonuclease family. RNase II subfamily.

It is found in the cytoplasm. It catalyses the reaction Exonucleolytic cleavage in the 3'- to 5'-direction to yield nucleoside 5'-phosphates.. In terms of biological role, involved in mRNA degradation. Hydrolyzes single-stranded polyribonucleotides processively in the 3' to 5' direction. The chain is Exoribonuclease 2 from Cronobacter sakazakii (strain ATCC BAA-894) (Enterobacter sakazakii).